Reading from the N-terminus, the 545-residue chain is Glucose-6-phosphate isomerase (545 aa).

The Proton donor role is filled by Glu351. Active-site residues include His382 and Lys510.

The protein belongs to the GPI family.

The protein localises to the cytoplasm. The enzyme catalyses alpha-D-glucose 6-phosphate = beta-D-fructose 6-phosphate. It participates in carbohydrate biosynthesis; gluconeogenesis. Its pathway is carbohydrate degradation; glycolysis; D-glyceraldehyde 3-phosphate and glycerone phosphate from D-glucose: step 2/4. Its function is as follows. Catalyzes the reversible isomerization of glucose-6-phosphate to fructose-6-phosphate. The protein is Glucose-6-phosphate isomerase of Shewanella sp. (strain ANA-3).